Here is a 332-residue protein sequence, read N- to C-terminus: L-lactate dehydrogenase A chain (332 aa).

NAD(+)-binding positions include 29-57 (GMVGMASAISVLLKDLCDELALVDVMEEK) and arginine 99. Substrate is bound by residues arginine 106, asparagine 138, and arginine 169. Asparagine 138 contributes to the NAD(+) binding site. The Proton acceptor role is filled by histidine 193. Position 248 (threonine 248) interacts with substrate.

The protein belongs to the LDH/MDH superfamily. LDH family. Homotetramer.

It localises to the cytoplasm. The catalysed reaction is (S)-lactate + NAD(+) = pyruvate + NADH + H(+). The protein operates within fermentation; pyruvate fermentation to lactate; (S)-lactate from pyruvate: step 1/1. Its function is as follows. Interconverts simultaneously and stereospecifically pyruvate and lactate with concomitant interconversion of NADH and NAD(+). In Lycodichthys dearborni (Antarctic eelpout), this protein is L-lactate dehydrogenase A chain (ldha).